The chain runs to 212 residues: Orotate phosphoribosyltransferase (212 aa).

A 5-phospho-alpha-D-ribose 1-diphosphate-binding site is contributed by Lys-26. Orotate is bound at residue 34–35 (FF). Residues 72-73 (YK), Arg-98, Lys-99, Lys-102, His-104, and 123-131 (DDVISAGTS) each bind 5-phospho-alpha-D-ribose 1-diphosphate. Orotate-binding residues include Ser-127 and Arg-155.

The protein belongs to the purine/pyrimidine phosphoribosyltransferase family. PyrE subfamily. In terms of assembly, homodimer. Requires Mg(2+) as cofactor.

It carries out the reaction orotidine 5'-phosphate + diphosphate = orotate + 5-phospho-alpha-D-ribose 1-diphosphate. Its pathway is pyrimidine metabolism; UMP biosynthesis via de novo pathway; UMP from orotate: step 1/2. Its function is as follows. Catalyzes the transfer of a ribosyl phosphate group from 5-phosphoribose 1-diphosphate to orotate, leading to the formation of orotidine monophosphate (OMP). The chain is Orotate phosphoribosyltransferase from Thiobacillus denitrificans (strain ATCC 25259 / T1).